A 303-amino-acid chain; its full sequence is Acetyltransferase ataH (303 aa).

The signal sequence occupies residues M1–S23. The next 3 helical transmembrane spans lie at F42–F62, L194–L214, and G257–F277.

It belongs to the wax synthase family.

It is found in the membrane. Its pathway is mycotoxin biosynthesis. In terms of biological role, acetyltransferase; part of the gene cluster that mediates the biosynthesis of acetylaranotin, a member of the epipolythiodioxopiperazine (ETP) class of toxins characterized by a disulfide-bridged cyclic dipeptide. The first step of acetylaranotin biosynthesis is performed by the NRPS ataP which produces diketopiperazine cyclo-L-Phe-L-Phe via the condensation of 2 phenylalanines (L-Phe). The ataC domain of ataTC then catalyzes the formation of bishydroxylation of cyclo-L-Phe-L-Phe. The glutathione S-transferase domain ataG in ataIMG further catalyzes the conjugation of two glutathiones to the bishydroxylated intermediate. Next, the dipeptidase ataJ removes the Glu residues. The following step is performed by the carbon sulfur lyase domain ataI of ataIMG which may convert the bis-cysteinyl adduct to yield an epidithiol intermediate. The ataT domain from ataTC then catalyzes the oxidation of the free dithiols, followed by a cyclization step catalyzed by the cytochrome P450 ataF. AtaF probably acts as an epoxidase to promote a dual epoxidation formation at C8 and C9 along with C8' and C9', followed by the spontaneous nucleophilic attack of the amide nitrogens N10 and N10' to yield an intermediate with the pyrrolidine partial structure. The final steps of acetylaranotin biosynthesis involve the acetylation and ring rearrangement of an epitetrathiodiketopiperazine intermediate to produce acetylaranotin. AtaH probably catalyzes the acetylation of epitetrathiodiketopiperazine to produce a diacetate and ataY is responsible for the formation of the dihydrooxepin moiety that converts the diacetate intermediate to acetylaranotin via acetylapoaranotin. Both enzymes could function independently in the absence of the other. The acetylaranotin bis-thiomethyltransferase ataS located outside of acetylaranotin gene cluster is the main thiomethyltransferase responsible for converting acetylaranotin and its related intermediates to their methylated forms. The polypeptide is Acetyltransferase ataH (Aspergillus terreus (strain NIH 2624 / FGSC A1156)).